A 122-amino-acid chain; its full sequence is Large ribosomal subunit protein uL18 (122 aa).

The protein belongs to the universal ribosomal protein uL18 family. As to quaternary structure, part of the 50S ribosomal subunit; part of the 5S rRNA/L5/L18/L25 subcomplex. Contacts the 5S and 23S rRNAs.

This is one of the proteins that bind and probably mediate the attachment of the 5S RNA into the large ribosomal subunit, where it forms part of the central protuberance. The protein is Large ribosomal subunit protein uL18 of Synechococcus sp. (strain JA-2-3B'a(2-13)) (Cyanobacteria bacterium Yellowstone B-Prime).